Consider the following 559-residue polypeptide: Aspartokinase 3, chloroplastic (559 aa).

The transit peptide at 1 to 85 directs the protein to the chloroplast; it reads MAASMQFYGV…LNKTEKKLTC (85 aa). Lys-88, Gly-91, and Ser-120 together coordinate ATP. Glu-204 serves as a coordination point for substrate. ACT domains are found at residues 402–480 and 481–559; these read ITST…SIIS and LIGN…AASS.

This sequence belongs to the aspartokinase family. As to expression, highly expressed in xylem of leaves and hypocotyls, stele of roots and in trichomes after bolting. Weak expression in veins and mesophyll cells of caulone leaves, inflorescence stems, sepals, petals and stigmata.

The protein resides in the plastid. The protein localises to the chloroplast. The catalysed reaction is L-aspartate + ATP = 4-phospho-L-aspartate + ADP. It participates in amino-acid biosynthesis; L-lysine biosynthesis via DAP pathway; (S)-tetrahydrodipicolinate from L-aspartate: step 1/4. The protein operates within amino-acid biosynthesis; L-methionine biosynthesis via de novo pathway; L-homoserine from L-aspartate: step 1/3. Its pathway is amino-acid biosynthesis; L-threonine biosynthesis; L-threonine from L-aspartate: step 1/5. With respect to regulation, allosterically inhibited by lysine, but not by S-adenosyl-L-methionine (SAM). K(0.5) for lysine in the presence of physiological concentrations of substrates is 7.4 uM. No inhibition by threonine or leucine and no activation or inhibition by alanine, cysteine, isoleucine, serine, valine, methionine, glutamine, asparagine, glutamic acid or arginine. In terms of biological role, involved in the first step of essential amino acids lysine, threonine, methionine and isoleucine synthesis via the aspartate-family pathway. This is Aspartokinase 3, chloroplastic (AK3) from Arabidopsis thaliana (Mouse-ear cress).